The sequence spans 504 residues: Galactose/methyl galactoside import ATP-binding protein MglA (504 aa).

2 consecutive ABC transporter domains span residues leucine 8–aspartate 247 and threonine 258–isoleucine 504. Glycine 40–serine 47 contacts ATP.

This sequence belongs to the ABC transporter superfamily. Galactose/methyl galactoside importer (TC 3.A.1.2.3) family. In terms of assembly, the complex is composed of one ATP-binding protein (MglA), two transmembrane proteins (MglC) and a solute-binding protein (MglB).

Its subcellular location is the cell membrane. It carries out the reaction D-galactose(out) + ATP + H2O = D-galactose(in) + ADP + phosphate + H(+). The enzyme catalyses methyl beta-D-galactoside(out) + ATP + H2O = methyl beta-D-galactoside(in) + ADP + phosphate + H(+). Its function is as follows. Part of the ABC transporter complex MglABC involved in galactose/methyl galactoside import. Responsible for energy coupling to the transport system. In Clostridium tetani (strain Massachusetts / E88), this protein is Galactose/methyl galactoside import ATP-binding protein MglA.